The primary structure comprises 264 residues: uncharacterized protein (264 aa).

A divalent metal cation-binding residues include histidine 5, histidine 7, glutamate 93, histidine 134, histidine 158, and aspartate 208.

It belongs to the metallo-dependent hydrolases superfamily. TatD-type hydrolase family. The cofactor is a divalent metal cation.

This is an uncharacterized protein from Mycobacterium tuberculosis (strain ATCC 25618 / H37Rv).